We begin with the raw amino-acid sequence, 120 residues long: Large ribosomal subunit protein uL18 (120 aa).

The protein belongs to the universal ribosomal protein uL18 family. In terms of assembly, part of the 50S ribosomal subunit; part of the 5S rRNA/L5/L18/L25 subcomplex. Contacts the 5S and 23S rRNAs.

In terms of biological role, this is one of the proteins that bind and probably mediate the attachment of the 5S RNA into the large ribosomal subunit, where it forms part of the central protuberance. In Staphylococcus haemolyticus (strain JCSC1435), this protein is Large ribosomal subunit protein uL18.